The chain runs to 137 residues: Ribosome-binding factor A (137 aa).

Belongs to the RbfA family. Monomer. Binds 30S ribosomal subunits, but not 50S ribosomal subunits or 70S ribosomes.

It is found in the cytoplasm. In terms of biological role, one of several proteins that assist in the late maturation steps of the functional core of the 30S ribosomal subunit. Associates with free 30S ribosomal subunits (but not with 30S subunits that are part of 70S ribosomes or polysomes). Required for efficient processing of 16S rRNA. May interact with the 5'-terminal helix region of 16S rRNA. This Cereibacter sphaeroides (strain ATCC 17029 / ATH 2.4.9) (Rhodobacter sphaeroides) protein is Ribosome-binding factor A.